Here is a 185-residue protein sequence, read N- to C-terminus: Ribosome-recycling factor (185 aa).

The disordered stretch occupies residues Leu163–Gly185. Residues Ala167–Gly185 are compositionally biased toward basic and acidic residues.

This sequence belongs to the RRF family.

It localises to the cytoplasm. Functionally, responsible for the release of ribosomes from messenger RNA at the termination of protein biosynthesis. May increase the efficiency of translation by recycling ribosomes from one round of translation to another. The protein is Ribosome-recycling factor of Latilactobacillus sakei subsp. sakei (strain 23K) (Lactobacillus sakei subsp. sakei).